A 180-amino-acid polypeptide reads, in one-letter code: Putative manganese efflux pump MntP (180 aa).

6 helical membrane passes run 6–26 (LFAL…GIGI), 34–54 (IALI…LGWY), 67–87 (ASIA…WDTI), 103–123 (GGLL…GFTL), 130–150 (LVLA…AGLT), and 159–179 (IGER…VKLF).

The protein belongs to the MntP (TC 9.B.29) family.

The protein resides in the cell membrane. Probably functions as a manganese efflux pump. In Desulforamulus reducens (strain ATCC BAA-1160 / DSM 100696 / MI-1) (Desulfotomaculum reducens), this protein is Putative manganese efflux pump MntP.